The primary structure comprises 363 residues: Cinnamyl alcohol dehydrogenase 2 (363 aa).

Residue Cys47 coordinates Zn(2+). Thr49 lines the NADP(+) pocket. 7 residues coordinate Zn(2+): His69, Glu70, Cys100, Cys103, Cys106, Cys114, and Cys163. Residues Thr167, 188-193 (GLGGVG), 211-216 (SSSARK), Thr251, Gly275, and 298-300 (SFI) contribute to the NADP(+) site.

The protein belongs to the zinc-containing alcohol dehydrogenase family. Homodimer. Zn(2+) is required as a cofactor. As to expression, expressed in roots behind the root tips in the pericycle region and layer of cortical cells adjacent to the exodermis. Expressed in vascular bundles and lateral veins of leaf sheaths and blades. Expressed in the vicinity of vascular bundles in the first internode below the inflorescence. Highly expressed in the culm.

The catalysed reaction is (E)-cinnamyl alcohol + NADP(+) = (E)-cinnamaldehyde + NADPH + H(+). It carries out the reaction (E)-coniferol + NADP(+) = (E)-coniferaldehyde + NADPH + H(+). It catalyses the reaction (E)-sinapyl alcohol + NADP(+) = (E)-sinapaldehyde + NADPH + H(+). The enzyme catalyses (E)-4-coumaroyl alcohol + NADP(+) = (E)-4-coumaraldehyde + NADPH + H(+). The catalysed reaction is (E)-caffeyl alcohol + NADP(+) = (E)-caffeyl aldehyde + NADPH + H(+). The protein operates within aromatic compound metabolism; phenylpropanoid biosynthesis. Its function is as follows. Involved in lignin biosynthesis. Catalyzes the final step specific for the production of lignin monomers. Catalyzes the NADPH-dependent reduction of coniferaldehyde and sinapaldehyde to their respective alcohols. Plays the major role in monolignol biosynthesis. Functions cooperatively with COMT in the culm internodes for the biosynthesis of monolignols, the lignin precursors. May be involved in lignin biosynthesis in leaves and roots. The chain is Cinnamyl alcohol dehydrogenase 2 from Oryza sativa subsp. japonica (Rice).